Consider the following 324-residue polypeptide: MQTISKASSATSFFRCSRKLSSQPCVRQLNIRKSLVCRVMKLVSSPLRTLRGAGKSIRVSKFCSVSNVSSLQIELVPCLKDNYAYILHDEDTGTVGVVDPSEAEPIIDSLKRSGRNLTYILNTHHHYDHTGGNLELKDRYGAKVIGSAMDKDRIPGIDMALKDGDKWMFAGHEVHVMDTPGHTKGHISLYFPGSRAIFTGDTMFSLSCGKLFEGTPKQMLASLQKITSLPDDTSIYCGHEYTLSNSKFALSLEPNNEVLQSYAAHVAELRSKKLPTIPTTVKMEKACNPFLRSSNTDIRRALRIPEAADEAEALGIIRKAKDDF.

A mitochondrion-targeting transit peptide spans 1–64; the sequence is MQTISKASSA…KSIRVSKFCS (64 aa). Zn(2+) is bound by residues His-124 and His-126. Fe cation contacts are provided by Asp-128 and His-129. Residues His-182 and Asp-201 each coordinate Zn(2+). Fe cation is bound by residues Asp-201 and His-239.

Belongs to the metallo-beta-lactamase superfamily. Glyoxalase II family. As to quaternary structure, monomer. Requires Fe(3+) as cofactor. The cofactor is Fe(2+). Zn(2+) is required as a cofactor.

It localises to the mitochondrion. It catalyses the reaction an S-(2-hydroxyacyl)glutathione + H2O = a 2-hydroxy carboxylate + glutathione + H(+). It functions in the pathway secondary metabolite metabolism; methylglyoxal degradation; (R)-lactate from methylglyoxal: step 2/2. Functionally, thiolesterase that catalyzes the hydrolysis of S-D-lactoyl-glutathione to form glutathione and D-lactic acid. This Arabidopsis thaliana (Mouse-ear cress) protein is Hydroxyacylglutathione hydrolase 2, mitochondrial.